The sequence spans 212 residues: Thymidylate kinase (212 aa).

Residue 11–18 (GGEGVGKS) participates in ATP binding.

It belongs to the thymidylate kinase family.

The enzyme catalyses dTMP + ATP = dTDP + ADP. Its function is as follows. Phosphorylation of dTMP to form dTDP in both de novo and salvage pathways of dTTP synthesis. In Chromohalobacter salexigens (strain ATCC BAA-138 / DSM 3043 / CIP 106854 / NCIMB 13768 / 1H11), this protein is Thymidylate kinase.